Here is a 2431-residue protein sequence, read N- to C-terminus: Histone-lysine N-methyltransferase trr (2431 aa).

Disordered stretches follow at residues 34-78, 135-201, 213-235, and 759-789; these read LQKR…STAP, DADK…ENSG, ASGA…AGTP, and QSAN…TPMN. Residues 142–165 show a composition bias toward polar residues; it reads YRISTPRNSQSNPLLHRNTAFTSF. 3 stretches are compositionally biased toward low complexity: residues 171–183, 218–235, and 767–787; these read ASSS…STAS, SSTS…AGTP, and ATST…NATP. The LXXLL motif 1 signature appears at 801-805; it reads LKQLL. Disordered stretches follow at residues 863–895, 918–973, 1226–1292, 1404–1433, and 1478–1500; these read PVPT…GGSS, VGGE…QVKQ, HPQQ…AGGA, TSGG…KGGS, and GLVG…AEKM. Low complexity-rich tracts occupy residues 866–895, 952–970, and 1226–1241; these read TATQ…GGSS, QQQQ…SPHQ, and HPQQ…QPQN. Positions 1269 to 1281 are enriched in basic residues; that stretch reads RKRRKREVQKPRR. Residues 1410-1422 are compositionally biased toward low complexity; that stretch reads PASMSSAASAGSS. Gly residues predominate over residues 1423–1433; that stretch reads SAGGGKLKGGS. Threonine 1486 is subject to Phosphothreonine. Serine 1488 and serine 1490 each carry phosphoserine. Positions 1652–1656 match the LXXLL motif 2 motif; the sequence is LANLL. The segment at 1790–1836 is disordered; it reads GGSAVKSSNGDSPGSFCASSTAPAEMVVKQEPEDEDEKTPSVPGNPT. Positions 1794–1811 are enriched in polar residues; it reads VKSSNGDSPGSFCASSTA. The C2HC pre-PHD-type zinc-finger motif lies at 1895–1935; the sequence is TRQCVFCNQRGDGQADGPSRLLNFDVDKWVHLNCALWSNGV. The PHD-type zinc finger occupies 1956–2003; sequence QACSACHQPGATIKCFKSRCNSLYHLPCAIREECVFYKNKSVHCSVHG. Positions 2060–2064 match the LXXLL motif 3 motif; the sequence is LSNLL. Residues 2061–2121 enclose the FYR N-terminal domain; that stretch reads SNLLRVGNMT…CRYICSIAEA (61 aa). In terms of domain architecture, FYR C-terminal spans 2122–2209; the sequence is GCKPEFRIQV…ETLTDYRFKY (88 aa). Positions 2291–2407 constitute an SET domain; that stretch reads NNVYLARSKI…RGEELSYDYK (117 aa). In terms of domain architecture, Post-SET spans 2415 to 2431; that stretch reads HKIPCACGAPNCRKWMN.

Belongs to the class V-like SAM-binding methyltransferase superfamily. Histone-lysine methyltransferase family. TRX/MLL subfamily. As to quaternary structure, component of the MLL3/4 complex composed at least of the catalytic subunit trr, ash2, Rbbp5, Dpy-30L1, wds, hcf, ptip, Pa1, Utx, Lpt and Ncoa6. Interacts with nuclear receptor EcR in an ecdysone-dependent manner. Interacts with ash2; the interaction stabilizes trr. In terms of tissue distribution, widely expressed.

The protein resides in the nucleus. The protein localises to the chromosome. It catalyses the reaction L-lysyl(4)-[histone H3] + 3 S-adenosyl-L-methionine = N(6),N(6),N(6)-trimethyl-L-lysyl(4)-[histone H3] + 3 S-adenosyl-L-homocysteine + 3 H(+). Its function is as follows. Histone methyltransferase that acts as a coactivator for the ecdysone receptor during development. Specifically trimethylates 'Lys-4' of histone H3, a specific tag for epigenetic transcriptional activation. Recruited by EcR in an ecdysone-dependent manner causing H3 'Lys-4' trimethylation at ecdysone-inducible promoters, leading to activate expression. Plays a central role in the developing compound eye, during the progression of the morphogenetic furrow and in post-furrow differentiation of the retinal epithelium, notably by activating expression of hh. Also required for wing and abdominal development. In Drosophila melanogaster (Fruit fly), this protein is Histone-lysine N-methyltransferase trr (trr).